Reading from the N-terminus, the 245-residue chain is Acetylglutamate kinase (245 aa).

Residues 41 to 42, Arg-63, and Asn-156 each bind substrate; that span reads GG.

The protein belongs to the acetylglutamate kinase family. ArgB subfamily.

It is found in the cytoplasm. It carries out the reaction N-acetyl-L-glutamate + ATP = N-acetyl-L-glutamyl 5-phosphate + ADP. Its pathway is amino-acid biosynthesis; L-arginine biosynthesis; N(2)-acetyl-L-ornithine from L-glutamate: step 2/4. Its function is as follows. Catalyzes the ATP-dependent phosphorylation of N-acetyl-L-glutamate. The chain is Acetylglutamate kinase from Streptococcus sanguinis (strain SK36).